We begin with the raw amino-acid sequence, 1119 residues long: Putative transcription factor SEF1 (1119 aa).

Disordered regions lie at residues 1-70 and 86-105; these read MGDP…TQSR and QNGE…SKGK. Over residues 47–70 the composition is skewed to polar residues; sequence LHTQQSYYGNGTDGASESALTQSR. Residues 118–148 constitute a DNA-binding region (zn(2)-C6 fungal-type); it reads CTHCRQHKIKCNASEKFPAPCSRCERMGLHC. Disordered stretches follow at residues 236 to 290, 306 to 335, 894 to 913, 926 to 962, and 994 to 1018; these read QLLQ…PANT, SQQI…SSKQ, ASSS…TDTN, KKSS…AHNT, and SADS…PDTN. Low complexity predominate over residues 243–260; that stretch reads TTTTNPTTSSNSKVVTPT. The span at 261–288 shows a compositional bias: polar residues; that stretch reads GSDHSPASHNGGSLSSGKPQLLNDSVPA. A compositionally biased stretch (low complexity) spans 306–322; the sequence is SQQISSSSPQNSSPTTT. Composition is skewed to polar residues over residues 323–335, 902–913, and 931–942; these read GHSP…SSKQ, RLNADNPTTDTN, and SSDTPTNKPKFN. Residues 943-954 show a composition bias toward low complexity; it reads STSSIPTATPTS.

It localises to the nucleus. Putative transcription factor. Suppresses the lethal phenotype of RPM2 deletion. In Kluyveromyces lactis (strain ATCC 8585 / CBS 2359 / DSM 70799 / NBRC 1267 / NRRL Y-1140 / WM37) (Yeast), this protein is Putative transcription factor SEF1 (SEF1).